We begin with the raw amino-acid sequence, 392 residues long: Phosphoglycerate kinase (392 aa).

Residues 21-23 (DMN), Arg-36, 59-62 (HLGR), Arg-114, and Arg-147 contribute to the substrate site. Residues Lys-198, Glu-320, and 346-349 (GGDT) contribute to the ATP site.

It belongs to the phosphoglycerate kinase family. As to quaternary structure, monomer.

The protein localises to the cytoplasm. It carries out the reaction (2R)-3-phosphoglycerate + ATP = (2R)-3-phospho-glyceroyl phosphate + ADP. It participates in carbohydrate degradation; glycolysis; pyruvate from D-glyceraldehyde 3-phosphate: step 2/5. The polypeptide is Phosphoglycerate kinase (Neisseria meningitidis serogroup A / serotype 4A (strain DSM 15465 / Z2491)).